Reading from the N-terminus, the 386-residue chain is Ovalbumin (386 aa).

The residue at position 2 (glycine 2) is an N-acetylglycine. Serine 69 is modified (phosphoserine). A disulfide bridge links cysteine 74 with cysteine 121. Asparagine 293 carries N-linked (GlcNAc...) asparagine glycosylation. Residue serine 345 is modified to Phosphoserine.

It belongs to the serpin family. Ov-serpin subfamily. Post-translationally, the N-terminus is blocked.

Its subcellular location is the secreted. Functionally, storage protein of egg white. Lacks protease inhibitory activity. The chain is Ovalbumin (SERPINB14) from Dromaius novaehollandiae (Emu).